The sequence spans 106 residues: UPF0145 protein CTC_01500 (106 aa).

The protein belongs to the UPF0145 family.

This chain is UPF0145 protein CTC_01500, found in Clostridium tetani (strain Massachusetts / E88).